We begin with the raw amino-acid sequence, 213 residues long: Putative transmembrane protein DDB_G0267860 (213 aa).

An N-terminal signal peptide occupies residues 1-22 (MKTKILLLNFIIIFFLINVNLA). Residues 23 to 191 (IKKDSPFKEI…SSKFDSSTSS (169 aa)) are Extracellular-facing. 2 N-linked (GlcNAc...) asparagine glycosylation sites follow: N92 and N114. A helical transmembrane segment spans residues 192–212 (ISINTLAILSLLFLIFINKLI). A topological domain (cytoplasmic) is located at residue N213.

The protein resides in the membrane. This Dictyostelium discoideum (Social amoeba) protein is Putative transmembrane protein DDB_G0267860.